The primary structure comprises 712 residues: T-box transcription factor TBX2 (712 aa).

The segment at residues 109 to 287 (LEAKELWDQF…NNPFAKGFRD (179 aa)) is a DNA-binding region (T-box). The segment at 313 to 450 (PERDGAESDA…EGKEQGLAPL (138 aa)) is disordered. Positions 326 to 336 (DPPPAREPPTS) are enriched in pro residues. Ser336, Ser342, and Ser360 each carry phosphoserine. 3 stretches are compositionally biased toward basic and acidic residues: residues 363–372 (EPERLSEERA), 391–409 (TEPE…KEPA), and 421–444 (SLEK…EGKE). The tract at residues 518–601 (GGNGGGGGPG…ATSAAAAAAA (84 aa)) is repression domain 1 (RD1). Ser622, Ser653, Ser657, and Ser676 each carry phosphoserine. Residues 637–687 (LTTGLASEGSKAAGGNSREPSPLPELALRKVGAPSRGALSPSGSAKEAANE) form a disordered region.

Binds DNA as a monomer. Interacts with PML (isoform PML-2, isoform PML-3 and isoform PML-4). As to expression, expressed primarily in adult in kidney, lung, and placenta. Weak expression in heart and ovary.

The protein resides in the nucleus. Its function is as follows. Transcription factor which acts as a transcriptional repressor. May also function as a transcriptional activator. Binds to the palindromic T site 5'-TTCACACCTAGGTGTGAA-3' DNA sequence, or a half-site, which are present in the regulatory region of several genes. Required for cardiac atrioventricular canal formation. May cooperate with NKX2.5 to negatively modulate expression of NPPA/ANF in the atrioventricular canal. May play a role as a positive regulator of TGFB2 expression, perhaps acting in concert with GATA4 in the developing outflow tract myocardium. Plays a role in limb pattern formation. Acts as a transcriptional repressor of ADAM10 gene expression, perhaps in concert with histone deacetylase HDAC1 as cofactor. Involved in branching morphogenesis in both developing lungs and adult mammary glands, via negative modulation of target genes; acting redundantly with TBX3. Required, together with TBX3, to maintain cell proliferation in the embryonic lung mesenchyme; perhaps acting downstream of SHH, BMP and TGFbeta signaling. Involved in modulating early inner ear development, acting independently of, and also redundantly with TBX3, in different subregions of the developing ear. Acts as a negative regulator of PML function in cellular senescence. Acts as a negative regulator of expression of CDKN1A/p21, IL33 and CCN4; repression of CDKN1A is enhanced in response to UV-induced stress, perhaps as a result of phosphorylation by p38 MAPK. Negatively modulates expression of CDKN2A/p14ARF and CDH1/E-cadherin. Plays a role in induction of the epithelial-mesenchymal transition (EMT). Plays a role in melanocyte proliferation, perhaps via regulation of cyclin CCND1. Involved in melanogenesis, acting via negative modulation of expression of DHICA oxidase/TYRP1 and P protein/OCA2. Involved in regulating retinal pigment epithelium (RPE) cell proliferation, perhaps via negatively modulating transcription of the transcription factor CEBPD. The sequence is that of T-box transcription factor TBX2 (TBX2) from Homo sapiens (Human).